The chain runs to 340 residues: Methionine import ATP-binding protein MetN (340 aa).

An ABC transporter domain is found at 8 to 246 (ISVKNLNKEI…PYSSITEELF (239 aa)). 40–47 (GHSGSGKS) contacts ATP.

This sequence belongs to the ABC transporter superfamily. Methionine importer (TC 3.A.1.24) family. As to quaternary structure, the complex is composed of two ATP-binding proteins (MetN), two transmembrane proteins (MetI) and a solute-binding protein (MetQ).

The protein resides in the cell inner membrane. It catalyses the reaction L-methionine(out) + ATP + H2O = L-methionine(in) + ADP + phosphate + H(+). The enzyme catalyses D-methionine(out) + ATP + H2O = D-methionine(in) + ADP + phosphate + H(+). Part of the ABC transporter complex MetNIQ involved in methionine import. Responsible for energy coupling to the transport system. The chain is Methionine import ATP-binding protein MetN from Chlamydia felis (strain Fe/C-56) (Chlamydophila felis).